The following is a 319-amino-acid chain: MSLNYLDFEQPIAELEAKIDSLKSVGRQDEKLDINLDEEVQRLRDKSVELTRKIFSDLGAWQIAQLARHPLRPYTLDYVRNVFTDFDELAGDRAYADDKAIVGGIARLEDRPVMIIGHQKGRETKEKIRRNFGMPAPEGYRKALRLMEMAERFNMPIITFIDTPGAYPGVGAEERGQSEAIARNLREMSGLKVPVICTVIGEGGSGGALAIGVGDKVNMLQYSTYSVISPEGCASILWKSADKAPLAAEAMGIIAPRLKELKLIDSVIPEPLGGAHRDPLAIGASLKAQLLADLADLDTLTKAELLDRRYQRLMSYGYA.

The CoA carboxyltransferase C-terminal domain maps to 35–296; the sequence is NLDEEVQRLR…KAQLLADLAD (262 aa).

This sequence belongs to the AccA family. As to quaternary structure, acetyl-CoA carboxylase is a heterohexamer composed of biotin carboxyl carrier protein (AccB), biotin carboxylase (AccC) and two subunits each of ACCase subunit alpha (AccA) and ACCase subunit beta (AccD).

Its subcellular location is the cytoplasm. The catalysed reaction is N(6)-carboxybiotinyl-L-lysyl-[protein] + acetyl-CoA = N(6)-biotinyl-L-lysyl-[protein] + malonyl-CoA. It functions in the pathway lipid metabolism; malonyl-CoA biosynthesis; malonyl-CoA from acetyl-CoA: step 1/1. Component of the acetyl coenzyme A carboxylase (ACC) complex. First, biotin carboxylase catalyzes the carboxylation of biotin on its carrier protein (BCCP) and then the CO(2) group is transferred by the carboxyltransferase to acetyl-CoA to form malonyl-CoA. The protein is Acetyl-coenzyme A carboxylase carboxyl transferase subunit alpha of Erwinia tasmaniensis (strain DSM 17950 / CFBP 7177 / CIP 109463 / NCPPB 4357 / Et1/99).